We begin with the raw amino-acid sequence, 318 residues long: MFMINLFSLIIPILLAVAFLTLVERKTLGYMQLRKGPNVVGPYGLLQPFADAIKLFTKEPLRPLTSSKFMFTIAPALALTLALTMWVPLPMPYPLINMNLSMLFILAMSSLAVYSILWSGWASNSKYALIGALRAVAQTISYEVSLAIILLPTMLMNGSFTLSTLTTTQEHLWLIFPLWPLAMMWFVSTLAETNRAPFDLTEGESELVSGFNVEYAAGPFALFFMTEYANIIMMNALTAILFLGTFHNPLLPEAHTINLILKTSLLTICFLWVRASYPRFRYDQLMHLLWKNFLPLTLALCMWHMSIPIMLACIPPQT.

8 helical membrane passes run 2–22 (FMIN…FLTL), 69–89 (FMFT…WVPL), 102–122 (MLFI…SGWA), 146–166 (LAII…STLT), 171–191 (HLWL…STLA), 231–251 (IIMM…NPLL), 253–273 (EAHT…FLWV), and 294–314 (LPLT…LACI).

Belongs to the complex I subunit 1 family. Core subunit of respiratory chain NADH dehydrogenase (Complex I) which is composed of 45 different subunits.

It localises to the mitochondrion inner membrane. It catalyses the reaction a ubiquinone + NADH + 5 H(+)(in) = a ubiquinol + NAD(+) + 4 H(+)(out). Functionally, core subunit of the mitochondrial membrane respiratory chain NADH dehydrogenase (Complex I) which catalyzes electron transfer from NADH through the respiratory chain, using ubiquinone as an electron acceptor. Essential for the catalytic activity and assembly of complex I. This Dugong dugon (Dugong) protein is NADH-ubiquinone oxidoreductase chain 1 (MT-ND1).